A 320-amino-acid chain; its full sequence is Malate dehydrogenase (320 aa).

NAD(+)-binding positions include 10–15 (GAGQIG) and Asp34. 2 residues coordinate substrate: Arg83 and Arg89. NAD(+) is bound by residues Asn96 and 119-121 (ITN). The substrate site is built by Asn121 and Arg152. Catalysis depends on His176, which acts as the Proton acceptor.

The protein belongs to the LDH/MDH superfamily. MDH type 3 family.

It catalyses the reaction (S)-malate + NAD(+) = oxaloacetate + NADH + H(+). Catalyzes the reversible oxidation of malate to oxaloacetate. The protein is Malate dehydrogenase of Cereibacter sphaeroides (strain ATCC 17025 / ATH 2.4.3) (Rhodobacter sphaeroides).